The primary structure comprises 605 residues: Aspartate--tRNA(Asp/Asn) ligase (605 aa).

An L-aspartate-binding site is contributed by glutamate 178. The tract at residues 202 to 205 (QLFK) is aspartate. Arginine 224 is a binding site for L-aspartate. ATP is bound by residues 224–226 (RDE) and glutamine 233. Histidine 458 lines the L-aspartate pocket. Glutamate 488 contributes to the ATP binding site. L-aspartate is bound at residue arginine 495. 540–543 (GLDR) provides a ligand contact to ATP. The segment at 580-605 (QQLKELHVTPAKPAKTTAKTKPRPAD) is disordered.

It belongs to the class-II aminoacyl-tRNA synthetase family. Type 1 subfamily. As to quaternary structure, homodimer.

It is found in the cytoplasm. The catalysed reaction is tRNA(Asx) + L-aspartate + ATP = L-aspartyl-tRNA(Asx) + AMP + diphosphate. In terms of biological role, aspartyl-tRNA synthetase with relaxed tRNA specificity since it is able to aspartylate not only its cognate tRNA(Asp) but also tRNA(Asn). Reaction proceeds in two steps: L-aspartate is first activated by ATP to form Asp-AMP and then transferred to the acceptor end of tRNA(Asp/Asn). This is Aspartate--tRNA(Asp/Asn) ligase from Thermosynechococcus vestitus (strain NIES-2133 / IAM M-273 / BP-1).